A 142-amino-acid polypeptide reads, in one-letter code: Large ribosomal subunit protein uL13 (142 aa).

The protein belongs to the universal ribosomal protein uL13 family. As to quaternary structure, part of the 50S ribosomal subunit.

This protein is one of the early assembly proteins of the 50S ribosomal subunit, although it is not seen to bind rRNA by itself. It is important during the early stages of 50S assembly. The polypeptide is Large ribosomal subunit protein uL13 (Erwinia tasmaniensis (strain DSM 17950 / CFBP 7177 / CIP 109463 / NCPPB 4357 / Et1/99)).